The chain runs to 315 residues: tRNA dimethylallyltransferase (315 aa).

10-17 (GPTEVGKT) is an ATP binding site. 12-17 (TEVGKT) lines the substrate pocket. The interaction with substrate tRNA stretch occupies residues 35 to 38 (DSMQ).

The protein belongs to the IPP transferase family. As to quaternary structure, monomer. The cofactor is Mg(2+).

It catalyses the reaction adenosine(37) in tRNA + dimethylallyl diphosphate = N(6)-dimethylallyladenosine(37) in tRNA + diphosphate. Functionally, catalyzes the transfer of a dimethylallyl group onto the adenine at position 37 in tRNAs that read codons beginning with uridine, leading to the formation of N6-(dimethylallyl)adenosine (i(6)A). The protein is tRNA dimethylallyltransferase of Geobacillus thermodenitrificans (strain NG80-2).